The following is a 118-amino-acid chain: Aspartate 1-decarboxylase (118 aa).

Ser-25 acts as the Schiff-base intermediate with substrate; via pyruvic acid in catalysis. Ser-25 is modified (pyruvic acid (Ser)). Thr-57 provides a ligand contact to substrate. Tyr-58 functions as the Proton donor in the catalytic mechanism. Residue 73–75 (GAA) participates in substrate binding.

This sequence belongs to the PanD family. In terms of assembly, heterooctamer of four alpha and four beta subunits. Requires pyruvate as cofactor. Post-translationally, is synthesized initially as an inactive proenzyme, which is activated by self-cleavage at a specific serine bond to produce a beta-subunit with a hydroxyl group at its C-terminus and an alpha-subunit with a pyruvoyl group at its N-terminus.

It is found in the cytoplasm. It catalyses the reaction L-aspartate + H(+) = beta-alanine + CO2. The protein operates within cofactor biosynthesis; (R)-pantothenate biosynthesis; beta-alanine from L-aspartate: step 1/1. Catalyzes the pyruvoyl-dependent decarboxylation of aspartate to produce beta-alanine. This is Aspartate 1-decarboxylase from Caulobacter vibrioides (strain ATCC 19089 / CIP 103742 / CB 15) (Caulobacter crescentus).